The sequence spans 311 residues: Methionyl-tRNA formyltransferase (311 aa).

112–115 lines the (6S)-5,6,7,8-tetrahydrofolate pocket; that stretch reads SLLP.

This sequence belongs to the Fmt family.

The catalysed reaction is L-methionyl-tRNA(fMet) + (6R)-10-formyltetrahydrofolate = N-formyl-L-methionyl-tRNA(fMet) + (6S)-5,6,7,8-tetrahydrofolate + H(+). Its function is as follows. Attaches a formyl group to the free amino group of methionyl-tRNA(fMet). The formyl group appears to play a dual role in the initiator identity of N-formylmethionyl-tRNA by promoting its recognition by IF2 and preventing the misappropriation of this tRNA by the elongation apparatus. This chain is Methionyl-tRNA formyltransferase, found in Rhizobium etli (strain ATCC 51251 / DSM 11541 / JCM 21823 / NBRC 15573 / CFN 42).